The sequence spans 226 residues: DnaJ homolog subfamily C member 30, mitochondrial (226 aa).

The transit peptide at 1-38 directs the protein to the mitochondrion; the sequence is MAAMRWRWWQRLLPWRLLQARGFPQNSAPSLGLGARTY. The J domain occupies 49–114; sequence ALYDLLGVPS…TLRRKYDRGL (66 aa). The segment at 116–157 is disordered; the sequence is SDEDLRGPGVRPSRTPAPDPGSPRTPPPTSRTHDGSRASPGA. Residues 130–144 are compositionally biased toward pro residues; it reads TPAPDPGSPRTPPPT. A helical transmembrane segment spans residues 208–225; the sequence is DTAAIFLIFSIFIIIGFY.

In terms of assembly, associates with the ATP synthase complex. Interacts with MT-ATP6; interaction is direct. Interacts with ATP5MC2; interaction is direct. As to expression, expressed in brain, heart, kidney, liver, lung, spleen, stomach and testis. Highly expressed in the brain. In the neocortex, expressed in most, if not all, glutamatergic excitatory projection neurons (pyramidal) and many interneurons, with the strongest signal noticeably in large pyramidal neurons of layer 3C. Also present in pyramidal neurons of layer 3C PNs of the superior temporal cortex, as well as in pyramidal neurons (Betz cells) of the layer 5B primary motor cortex (at protein level).

The protein localises to the mitochondrion inner membrane. Functionally, mitochondrial protein enriched in neurons that acts as a regulator of mitochondrial respiration. Associates with the ATP synthase complex and facilitates ATP synthesis. May be a chaperone protein involved in the turnover of the subunits of mitochondrial complex I N-module. It facilitates the degradation of N-module subunits damaged by oxidative stress, and contributes to complex I functional efficiency. The polypeptide is DnaJ homolog subfamily C member 30, mitochondrial (Homo sapiens (Human)).